Reading from the N-terminus, the 371-residue chain is Chaperone protein DnaJ (371 aa).

A J domain is found at 5 to 70 (SYYDILGVSK…KKRQAYDQFG (66 aa)). The CR-type zinc-finger motif lies at 139–217 (GREYKIEIPR…CGGQGLQEKR (79 aa)). Residues Cys152, Cys155, Cys169, Cys172, Cys191, Cys194, Cys205, and Cys208 each contribute to the Zn(2+) site. CXXCXGXG motif repeat units follow at residues 152–159 (CGDCNGSG), 169–176 (CPDCGGSG), 191–198 (CPTCRGKG), and 205–212 (CKTCGGQG).

Belongs to the DnaJ family. In terms of assembly, homodimer. Requires Zn(2+) as cofactor.

Its subcellular location is the cytoplasm. Functionally, participates actively in the response to hyperosmotic and heat shock by preventing the aggregation of stress-denatured proteins and by disaggregating proteins, also in an autonomous, DnaK-independent fashion. Unfolded proteins bind initially to DnaJ; upon interaction with the DnaJ-bound protein, DnaK hydrolyzes its bound ATP, resulting in the formation of a stable complex. GrpE releases ADP from DnaK; ATP binding to DnaK triggers the release of the substrate protein, thus completing the reaction cycle. Several rounds of ATP-dependent interactions between DnaJ, DnaK and GrpE are required for fully efficient folding. Also involved, together with DnaK and GrpE, in the DNA replication of plasmids through activation of initiation proteins. The polypeptide is Chaperone protein DnaJ (Leptospira borgpetersenii serovar Hardjo-bovis (strain JB197)).